A 247-amino-acid polypeptide reads, in one-letter code: 2,3-bisphosphoglycerate-dependent phosphoglycerate mutase (247 aa).

Residues 8–15 (RHGQSLWN), 21–22 (TG), Arg-60, 87–90 (ERHY), Lys-98, 114–115 (RR), and 183–184 (GN) contribute to the substrate site. His-9 (tele-phosphohistidine intermediate) is an active-site residue. Catalysis depends on Glu-87, which acts as the Proton donor/acceptor.

It belongs to the phosphoglycerate mutase family. BPG-dependent PGAM subfamily.

It carries out the reaction (2R)-2-phosphoglycerate = (2R)-3-phosphoglycerate. Its pathway is carbohydrate degradation; glycolysis; pyruvate from D-glyceraldehyde 3-phosphate: step 3/5. Catalyzes the interconversion of 2-phosphoglycerate and 3-phosphoglycerate. This is 2,3-bisphosphoglycerate-dependent phosphoglycerate mutase from Hydrogenobaculum sp. (strain Y04AAS1).